The sequence spans 338 residues: Tryptophan--tRNA ligase (338 aa).

ATP-binding positions include Gln-11 to Ser-13 and Gly-19 to Asn-20. A 'HIGH' region motif is present at residues Pro-12 to Asn-20. Asp-135 provides a ligand contact to L-tryptophan. ATP-binding positions include Gly-147–Asp-149, Val-189, and Lys-198–Ser-202. A 'KMSKS' region motif is present at residues Lys-198–Ser-202.

This sequence belongs to the class-I aminoacyl-tRNA synthetase family. Homodimer.

The protein localises to the cytoplasm. It catalyses the reaction tRNA(Trp) + L-tryptophan + ATP = L-tryptophyl-tRNA(Trp) + AMP + diphosphate + H(+). In terms of biological role, catalyzes the attachment of tryptophan to tRNA(Trp). The polypeptide is Tryptophan--tRNA ligase (Vibrio vulnificus (strain CMCP6)).